Here is a 184-residue protein sequence, read N- to C-terminus: Photosystem I assembly protein Ycf4 (184 aa).

The next 2 membrane-spanning stretches (helical) occupy residues 21–43 and 58–80; these read NFFWAFILILGALGFLLVGSSSY and VFIPQGIVMCFYGIAGISIGFYL.

Belongs to the Ycf4 family.

It localises to the plastid. The protein localises to the chloroplast thylakoid membrane. In terms of biological role, seems to be required for the assembly of the photosystem I complex. This is Photosystem I assembly protein Ycf4 from Psilotum nudum (Whisk fern).